The chain runs to 628 residues: tRNA uridine 5-carboxymethylaminomethyl modification enzyme MnmG 1 (628 aa).

An FAD-binding site is contributed by glycine 11–glycine 16. Glycine 280–phenylalanine 294 is an NAD(+) binding site.

The protein belongs to the MnmG family. In terms of assembly, homodimer. Heterotetramer of two MnmE and two MnmG subunits. FAD is required as a cofactor.

It is found in the cytoplasm. NAD-binding protein involved in the addition of a carboxymethylaminomethyl (cmnm) group at the wobble position (U34) of certain tRNAs, forming tRNA-cmnm(5)s(2)U34. The protein is tRNA uridine 5-carboxymethylaminomethyl modification enzyme MnmG 1 of Fusobacterium nucleatum subsp. nucleatum (strain ATCC 25586 / DSM 15643 / BCRC 10681 / CIP 101130 / JCM 8532 / KCTC 2640 / LMG 13131 / VPI 4355).